The chain runs to 493 residues: uncharacterized protein (493 aa).

The chain crosses the membrane as a helical span at residues 10-30; sequence LVPSTRFALSLVMFFGCLVTY. N-linked (GlcNAc...) asparagine glycans are attached at residues asparagine 35, asparagine 47, and asparagine 69. 6 helical membrane-spanning segments follow: residues 85–105, 112–132, 144–164, 175–195, 205–225, and 272–292; these read MVLS…GHLA, RVVF…PVAA, AAIG…WSVW, GVTY…SGFL, PSIF…WWYV, and AVWA…TMLV. Asparagine 305 is a glycosylation site (N-linked (GlcNAc...) asparagine). 4 helical membrane-spanning segments follow: residues 311–331, 348–368, 375–395, and 406–426; these read AVAS…GVLA, AAML…GYCG, VIIF…GFVV, and GTVM…SPAV. The N-linked (GlcNAc...) asparagine glycan is linked to asparagine 433. The helical transmembrane segment at 441–461 threads the bilayer; it reads MVLWLTAGILTIGALLFSIFA.

It belongs to the major facilitator superfamily. Sodium/anion cotransporter family.

The protein localises to the membrane. This is an uncharacterized protein from Caenorhabditis elegans.